A 495-amino-acid polypeptide reads, in one-letter code: GTPase Der (495 aa).

EngA-type G domains lie at P3–E166 and I208–T381. GTP is bound by residues G9–S16, D56–I60, N118–D121, G214–S221, D261–V265, and N326–D329. In terms of domain architecture, KH-like spans R382 to E466.

The protein belongs to the TRAFAC class TrmE-Era-EngA-EngB-Septin-like GTPase superfamily. EngA (Der) GTPase family. As to quaternary structure, associates with the 50S ribosomal subunit.

GTPase that plays an essential role in the late steps of ribosome biogenesis. The protein is GTPase Der of Pectobacterium carotovorum subsp. carotovorum (strain PC1).